Reading from the N-terminus, the 141-residue chain is Hemoglobin subunit alpha (141 aa).

Positions 1–141 (VLSPADKSNV…VSTVLTSKYR (141 aa)) constitute a Globin domain. Ser3 is modified (phosphoserine). Lys7 and Lys11 each carry N6-succinyllysine. Lys16 is subject to N6-acetyllysine; alternate. An N6-succinyllysine; alternate modification is found at Lys16. Tyr24 is subject to Phosphotyrosine. At Ser35 the chain carries Phosphoserine. Position 40 is an N6-succinyllysine (Lys40). Ser49 carries the post-translational modification Phosphoserine. His58 contributes to the O2 binding site. His87 lines the heme b pocket. Residue Ser102 is modified to Phosphoserine. Thr108 carries the post-translational modification Phosphothreonine. 2 positions are modified to phosphoserine: Ser124 and Ser131. A phosphothreonine mark is found at Thr134 and Thr137. Ser138 bears the Phosphoserine mark.

This sequence belongs to the globin family. In terms of assembly, heterotetramer of two alpha chains and two beta chains. In terms of tissue distribution, red blood cells.

In terms of biological role, involved in oxygen transport from the lung to the various peripheral tissues. Its function is as follows. Hemopressin acts as an antagonist peptide of the cannabinoid receptor CNR1. Hemopressin-binding efficiently blocks cannabinoid receptor CNR1 and subsequent signaling. The sequence is that of Hemoglobin subunit alpha (HBA) from Saguinus oedipus (Cotton-top tamarin).